The primary structure comprises 224 residues: Outer envelope pore protein 24, chloroplastic (224 aa).

Position 1 (M1) is a topological domain, cytoplasmic. Residues 2-11 traverse the membrane as a beta stranded segment; sequence KATVKGRYEG. The Chloroplast intermembrane portion of the chain corresponds to 12 to 16; the sequence is DKATA. The beta stranded transmembrane segment at 17-28 threads the bilayer; sequence AATLAFTPSAAD. Over 29 to 32 the chain is Cytoplasmic; sequence LRFK. The beta stranded transmembrane segment at 33-42 threads the bilayer; it reads ASATDAAFAR. The Chloroplast intermembrane segment spans residues 43–55; it reads GPSLEGLILTLEK. The beta stranded transmembrane segment at 56–64 threads the bilayer; it reads PGSFLLDLK. Topologically, residues 65 to 70 are cytoplasmic; it reads PHSKDV. The beta stranded transmembrane segment at 71–80 threads the bilayer; that stretch reads RFQFMNSALL. Residues 81–101 lie on the Chloroplast intermembrane side of the membrane; it reads LDRRVSLTYTHSTTLSPGPAK. The beta stranded transmembrane segment at 102–111 threads the bilayer; the sequence is LPARTALDGS. Over 112–116 the chain is Cytoplasmic; the sequence is LTFDP. Residues 117-126 traverse the membrane as a beta stranded segment; that stretch reads ANKLSLSHTL. The Chloroplast intermembrane portion of the chain corresponds to 127 to 130; sequence GSSG. Residues 131-140 traverse the membrane as a beta stranded segment; it reads CRVKYSYAHG. At 141–154 the chain is on the cytoplasmic side; the sequence is QDRLTTIEPCFDTA. Residues 155–166 traverse the membrane as a beta stranded segment; it reads NNAWDFAVTRKF. Topologically, residues 167 to 169 are chloroplast intermembrane; sequence QGG. A beta stranded transmembrane segment spans residues 170–178; that stretch reads DAIKATYQA. Residues 179 to 180 lie on the Cytoplasmic side of the membrane; it reads ST. Residues 181-189 traverse the membrane as a beta stranded segment; sequence KLLALDWTR. Over 190 to 212 the chain is Chloroplast intermembrane; sequence DSKIGASFKVAASFDLSDQSKAP. Residues 213-222 form a beta stranded membrane-spanning segment; that stretch reads KLIAESTWNY. At 223–224 the chain is on the cytoplasmic side; sequence EI.

It belongs to the plastid outer envelope porin OEP24 (TC 1.B.28.1) family. In terms of assembly, homooligomers form large rather nonselective pores in plastidial outer membranes.

Its subcellular location is the plastid. The protein resides in the etioplast membrane. It localises to the chloroplast outer membrane. Functionally, high-conductance voltage-dependent solute channel with a slight selectivity for cations transporting triosephosphates, dicarboxylic acids, ATP, inorganic phosphate (Pi), sugars, and positively or negatively charged amino acids. This Oryza sativa subsp. japonica (Rice) protein is Outer envelope pore protein 24, chloroplastic (OEP24).